The following is a 362-amino-acid chain: GTPase Obg (362 aa).

An Obg domain is found at 1–159; sequence MKFLDEAKVY…KTIWLRLKLI (159 aa). Positions 160–327 constitute an OBG-type G domain; the sequence is ADAGLVGLPN…VLRALRDVIV (168 aa). Residues 166 to 173, 191 to 195, 212 to 215, 279 to 282, and 308 to 310 contribute to the GTP site; these read GLPNAGKS, FTTLH, DIPG, SQID, and SAV. Residues S173 and T193 each contribute to the Mg(2+) site. Residues 332-362 are disordered; the sequence is EEKPAKVPKLRHRDMIVSDEGEGEDGADDQP. Acidic residues predominate over residues 348 to 362; the sequence is VSDEGEGEDGADDQP.

This sequence belongs to the TRAFAC class OBG-HflX-like GTPase superfamily. OBG GTPase family. Monomer. Mg(2+) serves as cofactor.

The protein localises to the cytoplasm. In terms of biological role, an essential GTPase which binds GTP, GDP and possibly (p)ppGpp with moderate affinity, with high nucleotide exchange rates and a fairly low GTP hydrolysis rate. Plays a role in control of the cell cycle, stress response, ribosome biogenesis and in those bacteria that undergo differentiation, in morphogenesis control. This chain is GTPase Obg, found in Rhizobium etli (strain CIAT 652).